Here is a 530-residue protein sequence, read N- to C-terminus: Tyrosinase (530 aa).

The first 17 residues, 1–17 (MLLAALYCLLWSFRTSA), serve as a signal peptide directing secretion. Residues 19–473 (HFPRACASSK…IKPYLEQAQR (455 aa)) lie on the Lumenal, melanosome side of the membrane. The N-linked (GlcNAc...) asparagine glycan is linked to Asn86. The Cu cation site is built by His180, His202, and His211. N-linked (GlcNAc...) asparagine glycosylation is found at Asn230, Asn290, and Asn337. His363 and His367 together coordinate Cu cation. N-linked (GlcNAc...) asparagine glycosylation is present at Asn371. His390 contributes to the Cu cation binding site. A helical transmembrane segment spans residues 474-494 (IWPWLIGAAVVGSVLTAVLGG). The Cytoplasmic segment spans residues 495 to 530 (LTSLLCRRKRNQLPEEKQPLLMEKEDYHNLMYQSHL).

This sequence belongs to the tyrosinase family. As to quaternary structure, forms an OPN3-dependent complex with DCT in response to blue light in melanocytes. Cu(2+) serves as cofactor. Glycosylated.

Its subcellular location is the melanosome membrane. It is found in the melanosome. It catalyses the reaction 2 L-dopa + O2 = 2 L-dopaquinone + 2 H2O. It carries out the reaction L-tyrosine + O2 = L-dopaquinone + H2O. The catalysed reaction is 2 5,6-dihydroxyindole-2-carboxylate + O2 = 2 indole-5,6-quinone-2-carboxylate + 2 H2O. Functionally, this is a copper-containing oxidase that functions in the formation of pigments such as melanins and other polyphenolic compounds. Catalyzes the initial and rate limiting step in the cascade of reactions leading to melanin production from tyrosine. In addition to hydroxylating tyrosine to DOPA (3,4-dihydroxyphenylalanine), also catalyzes the oxidation of DOPA to DOPA-quinone, and possibly the oxidation of DHI (5,6-dihydroxyindole) to indole-5,6 quinone. This Bos taurus (Bovine) protein is Tyrosinase (TYR).